The following is a 464-amino-acid chain: tRNA-2-methylthio-N(6)-dimethylallyladenosine synthase (464 aa).

The interval 1-24 (MSDLVPLSRKPAPAAGGPAPSPAA) is disordered. The segment covering 8–18 (SRKPAPAAGGP) has biased composition (low complexity). The 116-residue stretch at 27–142 (RKVYVHTFGC…LPEMVERARD (116 aa)) folds into the MTTase N-terminal domain. Cys-36, Cys-72, Cys-105, Cys-180, Cys-184, and Cys-187 together coordinate [4Fe-4S] cluster. The region spanning 166–398 (ARGRVTAFVT…LAAQRRIAGE (233 aa)) is the Radical SAM core domain. Residues 401 to 464 (AGELGKVVEV…GGSSLSGTLA (64 aa)) form the TRAM domain.

It belongs to the methylthiotransferase family. MiaB subfamily. Monomer. It depends on [4Fe-4S] cluster as a cofactor.

The protein localises to the cytoplasm. It catalyses the reaction N(6)-dimethylallyladenosine(37) in tRNA + (sulfur carrier)-SH + AH2 + 2 S-adenosyl-L-methionine = 2-methylsulfanyl-N(6)-dimethylallyladenosine(37) in tRNA + (sulfur carrier)-H + 5'-deoxyadenosine + L-methionine + A + S-adenosyl-L-homocysteine + 2 H(+). Functionally, catalyzes the methylthiolation of N6-(dimethylallyl)adenosine (i(6)A), leading to the formation of 2-methylthio-N6-(dimethylallyl)adenosine (ms(2)i(6)A) at position 37 in tRNAs that read codons beginning with uridine. The polypeptide is tRNA-2-methylthio-N(6)-dimethylallyladenosine synthase (Anaeromyxobacter sp. (strain K)).